The primary structure comprises 528 residues: Intestinal-type alkaline phosphatase (528 aa).

The signal sequence occupies residues 1 to 19 (MQGPWVLLLLGLRLQLSLG). A Mg(2+)-binding site is contributed by Asp-61. Zn(2+) contacts are provided by Asp-61 and Ser-111. Catalysis depends on Ser-111, which acts as the Phosphoserine intermediate. Cysteines 140 and 202 form a disulfide. N-linked (GlcNAc...) asparagine glycosylation occurs at Asn-141. Ser-174 lines the Mg(2+) pocket. Glu-235 provides a ligand contact to Ca(2+). A glycan (N-linked (GlcNAc...) asparagine) is linked at Asn-268. The Ca(2+) site is built by Phe-288, Glu-289, and Asp-304. Mg(2+) is bound at residue Glu-330. Residues Asp-335, His-339, Asp-376, and His-377 each contribute to the Zn(2+) site. N-linked (GlcNAc...) asparagine glycosylation is present at Asn-429. His-451 contacts Zn(2+). An intrachain disulfide couples Cys-486 to Cys-493. A lipid anchor (GPI-anchor amidated aspartate) is attached at Asp-503. A propeptide spans 504-528 (AAHPVAASLPLLAGTLLLLGASAAP) (removed in mature form).

It belongs to the alkaline phosphatase family. As to quaternary structure, homodimer. Requires Mg(2+) as cofactor. Zn(2+) serves as cofactor. It depends on Ca(2+) as a cofactor.

Its subcellular location is the cell membrane. It catalyses the reaction a phosphate monoester + H2O = an alcohol + phosphate. Alkaline phosphatase that can hydrolyze various phosphate compounds. This is Intestinal-type alkaline phosphatase (ALPI) from Homo sapiens (Human).